Consider the following 169-residue polypeptide: S-ribosylhomocysteine lyase (169 aa).

The Fe cation site is built by His-54, His-58, and Cys-128.

This sequence belongs to the LuxS family. Homodimer. It depends on Fe cation as a cofactor.

The enzyme catalyses S-(5-deoxy-D-ribos-5-yl)-L-homocysteine = (S)-4,5-dihydroxypentane-2,3-dione + L-homocysteine. Its function is as follows. Involved in the synthesis of autoinducer 2 (AI-2) which is secreted by bacteria and is used to communicate both the cell density and the metabolic potential of the environment. The regulation of gene expression in response to changes in cell density is called quorum sensing. Catalyzes the transformation of S-ribosylhomocysteine (RHC) to homocysteine (HC) and 4,5-dihydroxy-2,3-pentadione (DPD). This is S-ribosylhomocysteine lyase from Shewanella sp. (strain MR-7).